Reading from the N-terminus, the 364-residue chain is Probable UDP-arabinopyranose mutase 1 (364 aa).

The DXD motif signature appears at 110 to 112; sequence DDD. The N-linked (Glc...) arginine glycan is linked to arginine 158.

This sequence belongs to the RGP family. In terms of assembly, homopentamer or homohexamer. Mn(2+) is required as a cofactor. Mg(2+) serves as cofactor. Reversibly glycosylated by UDP-glucose, UDP-xylose and UDP-galactose.

The protein localises to the secreted. Its subcellular location is the cell wall. It localises to the cell junction. It is found in the plasmodesma. The protein resides in the golgi apparatus. The enzyme catalyses UDP-beta-L-arabinofuranose = UDP-beta-L-arabinopyranose. Its function is as follows. Probable UDP-L-arabinose mutase involved in the biosynthesis of cell wall non-cellulosic polysaccharides. Was initially shown to possess an autoglycosylating activity which is dependent on the presence of UDP-glucose and manganese. This is Probable UDP-arabinopyranose mutase 1 from Zea mays (Maize).